Reading from the N-terminus, the 570-residue chain is Proline--tRNA ligase (570 aa).

Belongs to the class-II aminoacyl-tRNA synthetase family. ProS type 1 subfamily. As to quaternary structure, homodimer.

The protein resides in the cytoplasm. It carries out the reaction tRNA(Pro) + L-proline + ATP = L-prolyl-tRNA(Pro) + AMP + diphosphate. Functionally, catalyzes the attachment of proline to tRNA(Pro) in a two-step reaction: proline is first activated by ATP to form Pro-AMP and then transferred to the acceptor end of tRNA(Pro). As ProRS can inadvertently accommodate and process non-cognate amino acids such as alanine and cysteine, to avoid such errors it has two additional distinct editing activities against alanine. One activity is designated as 'pretransfer' editing and involves the tRNA(Pro)-independent hydrolysis of activated Ala-AMP. The other activity is designated 'posttransfer' editing and involves deacylation of mischarged Ala-tRNA(Pro). The misacylated Cys-tRNA(Pro) is not edited by ProRS. The sequence is that of Proline--tRNA ligase (proS) from Aquifex aeolicus (strain VF5).